Here is a 244-residue protein sequence, read N- to C-terminus: MVKQELKIQVTTSSSSLSHSSSSSSSSTSALRHQSCKNKIKKYKGVRMRSWGSWVTEIRAPNQKTRIWLGSYSTAEAAARAYDAALLCLKGPKANLNFPNITTTSPFLMNIDEKTLLSPKSIQKVAAQAANSSSDHFTPPSDENDHDHDDGLDHHPSASSSAASSPPDDDHHNDDDGDLVSLMESFVDYNEHVSLMDPSLYEFGHNEIFFTNGDPFDYSPQLHSSEATMDDFYDDVDIPLWSFS.

The disordered stretch occupies residues 1–33 (MVKQELKIQVTTSSSSLSHSSSSSSSSTSALRH). The span at 11–29 (TTSSSSLSHSSSSSSSSTS) shows a compositional bias: low complexity. Residues 42 to 99 (KYKGVRMRSWGSWVTEIRAPNQKTRIWLGSYSTAEAAARAYDAALLCLKGPKANLNFP) constitute a DNA-binding region (AP2/ERF). Residues 123–178 (QKVAAQAANSSSDHFTPPSDENDHDHDDGLDHHPSASSSAASSPPDDDHHNDDDGD) form a disordered region. Over residues 143–156 (ENDHDHDDGLDHHP) the composition is skewed to basic and acidic residues. Low complexity predominate over residues 157–166 (SASSSAASSP).

The protein belongs to the AP2/ERF transcription factor family. ERF subfamily.

Its subcellular location is the nucleus. In terms of biological role, probably acts as a transcriptional activator. Binds to the GCC-box pathogenesis-related promoter element. May be involved in the regulation of gene expression by stress factors and by components of stress signal transduction pathways. This Arabidopsis thaliana (Mouse-ear cress) protein is Ethylene-responsive transcription factor ERF013 (ERF013).